The sequence spans 219 residues: Cytidylate kinase (219 aa).

Gly-21–Thr-29 contributes to the ATP binding site.

Belongs to the cytidylate kinase family. Type 1 subfamily.

It is found in the cytoplasm. The enzyme catalyses CMP + ATP = CDP + ADP. The catalysed reaction is dCMP + ATP = dCDP + ADP. In Rickettsia prowazekii (strain Madrid E), this protein is Cytidylate kinase.